The chain runs to 402 residues: Formate-dependent phosphoribosylglycinamide formyltransferase (402 aa).

N(1)-(5-phospho-beta-D-ribosyl)glycinamide contacts are provided by residues 23–24 and E83; that span reads EL. ATP is bound by residues R115, K156, 196-199, and E204; that span reads EEFV. The ATP-grasp domain maps to 120-316; that stretch reads RLAAEKVGVP…EFAIHARAVL (197 aa). Mg(2+) is bound by residues E274 and E287. N(1)-(5-phospho-beta-D-ribosyl)glycinamide contacts are provided by residues D294, K364, and 371 to 372; that span reads RR.

It belongs to the PurK/PurT family. In terms of assembly, homodimer.

The catalysed reaction is N(1)-(5-phospho-beta-D-ribosyl)glycinamide + formate + ATP = N(2)-formyl-N(1)-(5-phospho-beta-D-ribosyl)glycinamide + ADP + phosphate + H(+). It participates in purine metabolism; IMP biosynthesis via de novo pathway; N(2)-formyl-N(1)-(5-phospho-D-ribosyl)glycinamide from N(1)-(5-phospho-D-ribosyl)glycinamide (formate route): step 1/1. Involved in the de novo purine biosynthesis. Catalyzes the transfer of formate to 5-phospho-ribosyl-glycinamide (GAR), producing 5-phospho-ribosyl-N-formylglycinamide (FGAR). Formate is provided by PurU via hydrolysis of 10-formyl-tetrahydrofolate. In Ignicoccus hospitalis (strain KIN4/I / DSM 18386 / JCM 14125), this protein is Formate-dependent phosphoribosylglycinamide formyltransferase.